Consider the following 441-residue polypeptide: uncharacterized protein (441 aa).

217 to 224 (GETGTGKT) is a binding site for ATP.

This sequence belongs to the GSP E family.

This is an uncharacterized protein from Bacillus anthracis.